A 189-amino-acid polypeptide reads, in one-letter code: Molybdenum cofactor guanylyltransferase (189 aa).

GTP-binding positions include 10 to 12, Lys-23, Asn-51, Asp-69, and Asp-99; that span reads LAG. Residue Asp-99 participates in Mg(2+) binding.

This sequence belongs to the MobA family. Monomer. Requires Mg(2+) as cofactor.

It is found in the cytoplasm. It catalyses the reaction Mo-molybdopterin + GTP + H(+) = Mo-molybdopterin guanine dinucleotide + diphosphate. Functionally, transfers a GMP moiety from GTP to Mo-molybdopterin (Mo-MPT) cofactor (Moco or molybdenum cofactor) to form Mo-molybdopterin guanine dinucleotide (Mo-MGD) cofactor. The chain is Molybdenum cofactor guanylyltransferase from Pasteurella multocida (strain Pm70).